We begin with the raw amino-acid sequence, 258 residues long: Axonemal dynein light intermediate polypeptide 1 (258 aa).

2 disordered regions span residues 1–60 and 207–231; these read MIPP…CVPD and VNEQKAKCEATEKRESERRQVEEKK. Residues 34-44 show a composition bias toward low complexity; that stretch reads SPQQPGPSGSA. Residues 176 to 255 are a coiled coil; that stretch reads MRKALQAEQG…LKAQLEGIIA (80 aa).

This sequence belongs to the inner dynein arm light chain family. As to quaternary structure, interacts with CFAP45. Interacts with DYNC1H1. As to expression, expressed in many tissues. A smaller 0.9 kb and a larger 2.5 kb transcripts were detected at the highest level in the testis, at medium levels in the prostate, heart, liver, lung and pancreas, at low levels in the ovary, skeletal muscle and small intestine. Not detected in spleen, colon epithelium, thymus or peripheral blood leukocytes. The 0.9 kb transcript is expressed at a 20-fold higher level than the 2.5 kb transcript in the testis. Expressed in spermatozoa and airway epithelial cells (at protein level).

The protein localises to the cell projection. It is found in the cilium. Its subcellular location is the flagellum. It localises to the dynein axonemal particle. The protein resides in the cytoplasm. In terms of biological role, involved in sperm flagellum assembly. The polypeptide is Axonemal dynein light intermediate polypeptide 1 (Homo sapiens (Human)).